Reading from the N-terminus, the 842-residue chain is Glycogen phosphorylase, muscle form (842 aa).

N-acetylserine is present on serine 2. At serine 15 the chain carries Phosphoserine; by PHK; in form phosphorylase A. AMP contacts are provided by aspartate 43 and tyrosine 76. Phosphotyrosine occurs at positions 204 and 227. Residue 310 to 319 (RRFKSSKFGS) coordinates AMP. Serine 430 carries the post-translational modification Phosphoserine. Tyrosine 473 is modified (phosphotyrosine). Serine 514 bears the Phosphoserine mark. The residue at position 681 (lysine 681) is an N6-(pyridoxal phosphate)lysine. Serine 747 and serine 748 each carry phosphoserine.

It belongs to the glycogen phosphorylase family. As to quaternary structure, homodimer. Homotetramer; to form the enzymatically active phosphorylase A. It depends on pyridoxal 5'-phosphate as a cofactor. In terms of processing, phosphorylation of Ser-15 converts phosphorylase B (unphosphorylated) to phosphorylase A.

It carries out the reaction [(1-&gt;4)-alpha-D-glucosyl](n) + phosphate = [(1-&gt;4)-alpha-D-glucosyl](n-1) + alpha-D-glucose 1-phosphate. Its activity is regulated as follows. Allosterically regulated through the non-covalent binding of metabolites, being activated by AMP and inhibited by ATP, ADP, and glucose-6-phosphate. The activity is also controlled by post-translational modifications including phosphorylation. Its function is as follows. Allosteric enzyme that catalyzes the rate-limiting step in glycogen catabolism, the phosphorolytic cleavage of glycogen to produce glucose-1-phosphate, and plays a central role in maintaining cellular and organismal glucose homeostasis. The protein is Glycogen phosphorylase, muscle form of Mus musculus (Mouse).